The primary structure comprises 685 residues: E3 ubiquitin-protein ligase RNF103 (685 aa).

The next 4 helical transmembrane spans lie at 6 to 26 (FFLL…EAIV), 326 to 346 (LFVL…FITQ), 366 to 386 (LLII…LDSF), and 411 to 431 (MFYS…GLLI). The span at 526–543 (EEMSEGSQDTENDSESEN) shows a compositional bias: acidic residues. Positions 526–550 (EEMSEGSQDTENDSESENTDTLSSE) are disordered. The RING-type zinc finger occupies 621–663 (CVVCLENFENGCLLMGLPCGHVFHQNCIVMWLAGGRHCCPVCR).

In terms of assembly, interacts with DERL1 and VCP. As to expression, highly expressed in the normal cerebellum but not in the cerebral cortex.

The protein resides in the endoplasmic reticulum membrane. It catalyses the reaction S-ubiquitinyl-[E2 ubiquitin-conjugating enzyme]-L-cysteine + [acceptor protein]-L-lysine = [E2 ubiquitin-conjugating enzyme]-L-cysteine + N(6)-ubiquitinyl-[acceptor protein]-L-lysine.. The protein operates within protein modification; protein ubiquitination. Acts as an E2-dependent E3 ubiquitin-protein ligase, probably involved in the ER-associated protein degradation pathway. This is E3 ubiquitin-protein ligase RNF103 (RNF103) from Homo sapiens (Human).